The following is a 226-amino-acid chain: Exopolysaccharide production protein ExoY (226 aa).

Residues 34–54 (VLIAILALIALSPLFLLVMGL) form a helical membrane-spanning segment.

Belongs to the bacterial sugar transferase family.

It localises to the cell membrane. The protein operates within glycan metabolism; exopolysaccharide biosynthesis. Its function is as follows. Needed for the addition of the first sugar (galactose) to the isoprenoid carrier. May function as a sugar transferase. The chain is Exopolysaccharide production protein ExoY (exoY) from Sinorhizobium fredii (strain NBRC 101917 / NGR234).